A 1264-amino-acid polypeptide reads, in one-letter code: Valine--tRNA ligase (1264 aa).

The residue at position 2 (Ser-2) is an N-acetylserine. Residues 89 to 219 form the GST C-terminal domain; the sequence is GSRAAVLVQQ…YSGARSVTQQ (131 aa). The span at 218-230 shows a compositional bias: polar residues; that stretch reads QQPGSEITAPQKT. Residues 218–296 are disordered; the sequence is QQPGSEITAP…GEKKDVSGTM (79 aa). Composition is skewed to basic and acidic residues over residues 234-248 and 260-275; these read LKKEAKKREKLEKFQ and HGEKKPKPEKKEKRDP. The 'HIGH' region motif lies at 344–354; sequence PNVTGSLHLGH. Ser-437 and Ser-527 each carry phosphoserine. Lys-645 carries the post-translational modification N6-acetyllysine. The 'KMSKS' region signature appears at 862 to 866; sequence KMSKS. Lys-865 is a binding site for ATP.

It belongs to the class-I aminoacyl-tRNA synthetase family. As to quaternary structure, forms high-molecular-mass aggregates with elongation factor 1.

The enzyme catalyses tRNA(Val) + L-valine + ATP = L-valyl-tRNA(Val) + AMP + diphosphate. With respect to regulation, can be regulated by protein kinase C-dependent phosphorylation. The protein is Valine--tRNA ligase (Vars1) of Rattus norvegicus (Rat).